The primary structure comprises 456 residues: MHNYRRETRQLLTLAIPVLIASVAQTSMGFVDTVMAGGVSATDMAAVSVASSIWLPAILFGVGLLIALVPIVAQLNGSGKKDKIPFEVQHGFLLALIISVPIMAILYNAGMLIDYMDVEPILAEKTIGYLHAVVYAVPAFLLFQTLRSFAEGLSLTVPGMVIGFIGLMANIPLNWIFVYGKFGFPEMGGVGCGVATAIVYWLMFFSMLVYVLVNKRLKRAGLFDVWYKPQPKAVLRLFKLGFPVAASMFFEVSLFAVIALMISPLGSIIVASHQVAINFSSLVFMLPMSLGIALSIRVGHMLGEQDLVGAKIASHCGLIVGLIMSLMTAILTIIYREEIALLYTDNADVIVLAGQLLFLAAVYQCSDAIQVVAAGALRGYKDMRAIFIRTFIAYWMLGLPVGYILGMTDWIVEPMGPHGFWIGNIVGLSAAAIMLAMRLRWIQCQSDEFQIAMSLK.

The next 12 membrane-spanning stretches (helical) occupy residues 11–31 (LLTL…MGFV), 53–73 (IWLP…PIVA), 93–113 (LLAL…GMLI), 126–146 (TIGY…FQTL), 159–179 (GMVI…IFVY), 193–213 (GVAT…YVLV), 242–262 (FPVA…ALMI), 276–296 (AINF…ALSI), 315–335 (HCGL…TIIY), 349–369 (VIVL…SDAI), 391–411 (FIAY…TDWI), and 417–437 (PHGF…MLAM).

This sequence belongs to the multi antimicrobial extrusion (MATE) (TC 2.A.66.1) family.

It localises to the cell inner membrane. Its function is as follows. Multidrug efflux pump that functions as a Na(+)/drug antiporter. This chain is Multidrug resistance protein NorM (norM), found in Photobacterium profundum (strain SS9).